The following is a 67-amino-acid chain: Medusin-H1 (67 aa).

The first 22 residues, 1–22, serve as a signal peptide directing secretion; the sequence is MDFLKKSLFLVLFLGFFSLSIC. Positions 23 to 48 are excised as a propeptide; that stretch reads EEEKRETEEKENEQEDDREERREEKR. The segment at 24-46 is disordered; sequence EEKRETEEKENEQEDDREERREE. Over residues 31-40 the composition is skewed to acidic residues; it reads EKENEQEDDR. L66 carries the post-translational modification Leucine amide.

Belongs to the frog skin active peptide (FSAP) family. Medusin subfamily. In terms of tissue distribution, expressed by the skin glands.

It is found in the secreted. Functionally, antimicrobial peptide with activity against Gram-positive bacteria (S.aureus, MIC=32 mg/L) and fungi (C.albicans, MIC=128 mg/L). Shows weak hemolytic activity. The polypeptide is Medusin-H1 (Pithecopus hypochondrialis (Orange-legged leaf frog)).